We begin with the raw amino-acid sequence, 609 residues long: MSALTTSQLATSATGFGIADRSAPSSLLRHGFQGLKPRSPAGGDATSLSVTTSARATPKQQRSVQRGSRRFPSVVVYATGAGMNVVFVGAEMAPWSKTGGLGDVLGGLPPAMAANGHRVMVISPRYDQYKDAWDTSVVAEIKVADRYERVRFFHCYKRGVDRVFIDHPSFLEKVWGKTGEKIYGPDTGVDYKDNQMRFSLLCQAALEAPRILNLNNNPYFKGTYGEDVVFVCNDWHTGPLASYLKNNYQPNGIYRNAKVAFCIHNISYQGRFAFEDYPELNLSERFRSSFDFIDGYDTPVEGRKINWMKAGILEADRVLTVSPYYAEELISGIARGCELDNIMRLTGITGIVNGMDVSEWDPSKDKYITAKYDATTAIEAKALNKEALQAEAGLPVDRKIPLIAFIGRLEEQKGPDVMAAAIPELMQEDVQIVLLGTGKKKFEKLLKSMEEKYPGKVRAVVKFNAPLAHLIMAGADVLAVPSRFEPCGLIQLQGMRYGTPCACASTGGLVDTVIEGKTGFHMGRLSVDCKVVEPSDVKKVAATLKRAIKVVGTPAYEEMVRNCMNQDLSWKGPAKNWENVLLGLGVAGSAPGIEGDEIAPLAKENVAAP.

Residues 1 to 77 constitute a chloroplast transit peptide; it reads MSALTTSQLA…SRRFPSVVVY (77 aa). Residues 29 to 67 are disordered; sequence RHGFQGLKPRSPAGGDATSLSVTTSARATPKQQRSVQRG. A compositionally biased stretch (polar residues) spans 46–66; that stretch reads TSLSVTTSARATPKQQRSVQR. Lys-97 contributes to the ADP-alpha-D-glucose binding site. Positions 100, 408, 413, 462, and 493 each coordinate ADP. Cys-337 and Cys-529 are joined by a disulfide.

Belongs to the glycosyltransferase 1 family. Bacterial/plant glycogen synthase subfamily.

The protein localises to the plastid. The protein resides in the chloroplast. Its subcellular location is the amyloplast. It catalyses the reaction an NDP-alpha-D-glucose + [(1-&gt;4)-alpha-D-glucosyl](n) = [(1-&gt;4)-alpha-D-glucosyl](n+1) + a ribonucleoside 5'-diphosphate + H(+). It functions in the pathway glycan biosynthesis; starch biosynthesis. Its function is as follows. Required for the synthesis of amylose in endosperm. The sequence is that of Granule-bound starch synthase 1, chloroplastic/amyloplastic (WAXY) from Oryza sativa subsp. indica (Rice).